The sequence spans 899 residues: RNA-binding motif protein 25 (899 aa).

Residues 1–20 are compositionally biased toward polar residues; that stretch reads MADESSSPATGDPNSQKPES. Residues 1–112 are disordered; it reads MADESSSPAT…SMPQYQPQPG (112 aa). Over residues 26–63 the composition is skewed to pro residues; it reads IPNPNPNPSLTPPPPQQHSQPPVAPLVPPGPPYAPPAQ. An RRM domain is found at 204-281; it reads TTIYIGKIAT…QELLVNVNQA (78 aa). 2 disordered regions span residues 298 to 572 and 611 to 778; these read KKAK…EQNL and GESA…KESG. 2 stretches are compositionally biased toward basic and acidic residues: residues 317–340 and 354–372; these read EQDK…KENI and EADR…ERLK. Residues 375–384 are compositionally biased toward pro residues; the sequence is PLPPPPPPPA. The span at 430–505 shows a compositional bias: basic and acidic residues; it reads WSKRNDRRSR…QYEKEKEKEK (76 aa). Positions 434–578 form a coiled coil; that stretch reads NDRRSRERGE…EQNLQQQQLD (145 aa). The span at 515 to 524 shows a compositional bias: acidic residues; sequence YEEEEEEDDD. The short motif at 526–533 is the Nuclear localization signal 1 element; it reads SRRRWHRA. Positions 533 to 568 are enriched in basic and acidic residues; that stretch reads AALDERRRRQLREKEDDLADRLKEEEEVAEAKRSAE. Residues 626–640 are compositionally biased toward polar residues; that stretch reads GSGNESMAIDNNSGS. 2 stretches are compositionally biased toward basic and acidic residues: residues 723–733 and 740–778; these read PKEETIETEKQ and DKAS…KESG. Positions 735-742 match the Nuclear localization signal 2 motif; the sequence is SRRSHDKA. Residues 802–899 enclose the PWI domain; sequence EDLFSYEINW…EAGVPVKSKA (98 aa).

In terms of assembly, specifically associates with functional splicing complexes. Associates with exon junction complex (EJC) proteins. In terms of processing, phosphorylated; the phosphorylation level is repressed by abscisic acid (ABA).

The protein localises to the nucleus. RNA-binding protein that acts as a regulator of alternative pre-mRNA splicing. Negative regulator of responses to abscisic acid (ABA), including in early development. The protein is RNA-binding motif protein 25 of Arabidopsis thaliana (Mouse-ear cress).